A 214-amino-acid polypeptide reads, in one-letter code: Ras-related protein Rab-11A (214 aa).

GTP-binding positions include 20–28, 39–45, 68–72, 126–129, and 156–158; these read GDSGVGKSN, SLETKST, DTAGQ, NKSD, and SAL. An Effector region motif is present at residues 42–50; that stretch reads TKSTIGVEF. S-geranylgeranyl cysteine attachment occurs at residues cysteine 213 and cysteine 214.

The protein belongs to the small GTPase superfamily. Rab family.

It is found in the contractile vacuole membrane. Required for normal contractile vacuole structure and function. Cells expressing a dominant negative rab11A exhibit a more extensive contractile vacuole network and enlarged contractile vacuole bladders. These cells exhibit a functional defect in osmotic regulation where cells immersed in water become rounded and detach from the surface, and contain swollen contractile vacuoles. In Dictyostelium discoideum (Social amoeba), this protein is Ras-related protein Rab-11A (rab11A).